A 639-amino-acid chain; its full sequence is PTS-dependent dihydroxyacetone kinase operon regulatory protein (639 aa).

A sensor domain region spans residues 1–318 (MSGAFNNDGR…MRQLMTSQLG (318 aa)). Residues 52–189 (AMLTLGQAAL…AIAREVGNLL (138 aa)) form the GAF domain. The 63-residue stretch at 203–265 (NQLNALLESM…AVLQQAIKQA (63 aa)) folds into the PAS domain. Positions 327–552 (MPQDDPQTRR…LYSVIENLAL (226 aa)) constitute a Sigma-54 factor interaction domain. Residues 355–362 (GEEGVGKA) and 415–424 (AHGGTLFLEK) contribute to the ATP site.

In terms of assembly, homodimer. DhaR forms complexes with DhaK and DhaL-ADP.

Positively regulates the dhaKLM operon from a sigma-70 promoter. Represses its own expression. The protein is PTS-dependent dihydroxyacetone kinase operon regulatory protein of Escherichia coli (strain K12).